A 1358-amino-acid polypeptide reads, in one-letter code: DNA-directed RNA polymerase subunit beta (1358 aa).

Belongs to the RNA polymerase beta chain family. The RNAP catalytic core consists of 2 alpha, 1 beta, 1 beta' and 1 omega subunit. When a sigma factor is associated with the core the holoenzyme is formed, which can initiate transcription.

It catalyses the reaction RNA(n) + a ribonucleoside 5'-triphosphate = RNA(n+1) + diphosphate. Functionally, DNA-dependent RNA polymerase catalyzes the transcription of DNA into RNA using the four ribonucleoside triphosphates as substrates. In Francisella tularensis subsp. holarctica (strain FTNF002-00 / FTA), this protein is DNA-directed RNA polymerase subunit beta.